The following is a 157-amino-acid chain: D-aminoacyl-tRNA deacylase (157 aa).

The Gly-cisPro motif, important for rejection of L-amino acids signature appears at 137–138 (GP).

The protein belongs to the DTD family. In terms of assembly, homodimer.

The protein localises to the cytoplasm. The enzyme catalyses glycyl-tRNA(Ala) + H2O = tRNA(Ala) + glycine + H(+). The catalysed reaction is a D-aminoacyl-tRNA + H2O = a tRNA + a D-alpha-amino acid + H(+). In terms of biological role, an aminoacyl-tRNA editing enzyme that deacylates mischarged D-aminoacyl-tRNAs. Also deacylates mischarged glycyl-tRNA(Ala), protecting cells against glycine mischarging by AlaRS. Acts via tRNA-based rather than protein-based catalysis; rejects L-amino acids rather than detecting D-amino acids in the active site. By recycling D-aminoacyl-tRNA to D-amino acids and free tRNA molecules, this enzyme counteracts the toxicity associated with the formation of D-aminoacyl-tRNA entities in vivo and helps enforce protein L-homochirality. The polypeptide is D-aminoacyl-tRNA deacylase (Cyanothece sp. (strain PCC 7425 / ATCC 29141)).